The sequence spans 210 residues: Leucyl/phenylalanyl-tRNA--protein transferase (210 aa).

This sequence belongs to the L/F-transferase family.

The protein resides in the cytoplasm. It carries out the reaction N-terminal L-lysyl-[protein] + L-leucyl-tRNA(Leu) = N-terminal L-leucyl-L-lysyl-[protein] + tRNA(Leu) + H(+). The catalysed reaction is N-terminal L-arginyl-[protein] + L-leucyl-tRNA(Leu) = N-terminal L-leucyl-L-arginyl-[protein] + tRNA(Leu) + H(+). The enzyme catalyses L-phenylalanyl-tRNA(Phe) + an N-terminal L-alpha-aminoacyl-[protein] = an N-terminal L-phenylalanyl-L-alpha-aminoacyl-[protein] + tRNA(Phe). Functionally, functions in the N-end rule pathway of protein degradation where it conjugates Leu, Phe and, less efficiently, Met from aminoacyl-tRNAs to the N-termini of proteins containing an N-terminal arginine or lysine. This chain is Leucyl/phenylalanyl-tRNA--protein transferase, found in Ruegeria sp. (strain TM1040) (Silicibacter sp.).